A 367-amino-acid chain; its full sequence is Hyaluronidase (367 aa).

2 disulfide bridges follow: Cys48/Cys337 and Cys214/Cys226. A glycan (N-linked (GlcNAc...) asparagine) is linked at Asn108. Residue Glu138 is the Proton donor of the active site. Asn354 carries N-linked (GlcNAc...) asparagine glycosylation.

It belongs to the glycosyl hydrolase 56 family.

It carries out the reaction Random hydrolysis of (1-&gt;4)-linkages between N-acetyl-beta-D-glucosamine and D-glucuronate residues in hyaluronate.. Its function is as follows. May play a role in reproduction. This chain is Hyaluronidase, found in Polistes annularis (Paper wasp).